The following is a 145-amino-acid chain: uncharacterized protein (145 aa).

It belongs to the SAP18 family.

Its subcellular location is the cytoplasm. It localises to the nucleus. This is an uncharacterized protein from Schizosaccharomyces pombe (strain 972 / ATCC 24843) (Fission yeast).